A 321-amino-acid chain; its full sequence is Transcriptional activator protein Pur-alpha (321 aa).

Positions 1–54 (MADRDSGSEQGGAALGSGGSLGHPGSGSGSGGGGGGGGGGGGSGGGGGAPGGLQ) are disordered. A2 is subject to N-acetylalanine. Residues 9-51 (EQGGAALGSGGSLGHPGSGSGSGGGGGGGGGGGGSGGGGGAPG) show a composition bias toward gly residues. Residue S181 is modified to Phosphoserine. A compositionally biased stretch (low complexity) spans 294-313 (LHQQQQQQQEETTAATLLLQ). The disordered stretch occupies residues 294–321 (LHQQQQQQQEETTAATLLLQGEEEGEED).

This sequence belongs to the PUR DNA-binding protein family. As to quaternary structure, homodimer, heterodimer with PURB and heterotrimer with PURB and YBX1/Y-box protein 1. Interacts with FMR1; this interaction occurs in association with polyribosome.

The protein localises to the nucleus. Functionally, this is a probable transcription activator that specifically binds the purine-rich single strand of the PUR element located upstream of the c-Myc gene. May play a role in the initiation of DNA replication and in recombination. This Mus musculus (Mouse) protein is Transcriptional activator protein Pur-alpha (Pura).